The primary structure comprises 485 residues: Cysteine--tRNA ligase (485 aa).

Residue cysteine 28 participates in Zn(2+) binding. Positions 30–40 match the 'HIGH' region motif; the sequence is MTVYDYCHLGH. Zn(2+) contacts are provided by cysteine 212, histidine 237, and glutamate 241. Residues 269 to 273 carry the 'KMSKS' region motif; that stretch reads KMSKS. Residue lysine 272 participates in ATP binding.

The protein belongs to the class-I aminoacyl-tRNA synthetase family. As to quaternary structure, monomer. It depends on Zn(2+) as a cofactor.

It is found in the cytoplasm. The enzyme catalyses tRNA(Cys) + L-cysteine + ATP = L-cysteinyl-tRNA(Cys) + AMP + diphosphate. This is Cysteine--tRNA ligase from Bordetella bronchiseptica (strain ATCC BAA-588 / NCTC 13252 / RB50) (Alcaligenes bronchisepticus).